Here is a 122-residue protein sequence, read N- to C-terminus: RING-box protein 1B (122 aa).

The span at Met1–Pro23 shows a compositional bias: acidic residues. The disordered stretch occupies residues Met1–Gly28. Zn(2+) contacts are provided by Cys57, Cys60, Cys68, Cys71, Cys82, Cys89, His91, His94, His96, Cys108, and Asp111. The RING-type zinc-finger motif lies at Cys57–Asn112.

This sequence belongs to the RING-box family. In terms of assembly, part of a SCF complex consisting of Skpa (SKP1), Cul1, Roc1B and a F-box protein. Highly expressed in early embryos, and in pupae. Widely expressed in adult males, while it is weakly expressed in adult females.

It localises to the cytoplasm. It is found in the nucleus. It participates in protein modification; protein ubiquitination. Component of the SCF (SKP1-CUL1-F-box protein) E3 ubiquitin ligase complex, which mediates the ubiquitination and subsequent proteasomal degradation of target proteins. Through the RING-type zinc finger, seems to recruit the E2 ubiquitination enzyme to the complex and brings it into close proximity to the substrate. This Drosophila melanogaster (Fruit fly) protein is RING-box protein 1B (Roc1b).